Here is a 566-residue protein sequence, read N- to C-terminus: Proline--tRNA ligase (566 aa).

The protein belongs to the class-II aminoacyl-tRNA synthetase family. ProS type 1 subfamily. In terms of assembly, homodimer.

It localises to the cytoplasm. It catalyses the reaction tRNA(Pro) + L-proline + ATP = L-prolyl-tRNA(Pro) + AMP + diphosphate. Catalyzes the attachment of proline to tRNA(Pro) in a two-step reaction: proline is first activated by ATP to form Pro-AMP and then transferred to the acceptor end of tRNA(Pro). As ProRS can inadvertently accommodate and process non-cognate amino acids such as alanine and cysteine, to avoid such errors it has two additional distinct editing activities against alanine. One activity is designated as 'pretransfer' editing and involves the tRNA(Pro)-independent hydrolysis of activated Ala-AMP. The other activity is designated 'posttransfer' editing and involves deacylation of mischarged Ala-tRNA(Pro). The misacylated Cys-tRNA(Pro) is not edited by ProRS. The chain is Proline--tRNA ligase from Bacillus cereus (strain AH187).